A 360-amino-acid polypeptide reads, in one-letter code: Lipid-A-disaccharide synthase (360 aa).

It belongs to the LpxB family.

The catalysed reaction is a lipid X + a UDP-2-N,3-O-bis[(3R)-3-hydroxyacyl]-alpha-D-glucosamine = a lipid A disaccharide + UDP + H(+). The protein operates within bacterial outer membrane biogenesis; LPS lipid A biosynthesis. Condensation of UDP-2,3-diacylglucosamine and 2,3-diacylglucosamine-1-phosphate to form lipid A disaccharide, a precursor of lipid A, a phosphorylated glycolipid that anchors the lipopolysaccharide to the outer membrane of the cell. The protein is Lipid-A-disaccharide synthase of Helicobacter pylori (strain Shi470).